Here is a 303-residue protein sequence, read N- to C-terminus: Crk-like protein (303 aa).

Residues 14-102 enclose the SH2 domain; it reads WYMGPVSRQE…LDTTTLIEPA (89 aa). The SH3 1 domain maps to 123 to 183; the sequence is ENLEYVRTLY…PVPYVEKLVR (61 aa). Y127 carries the phosphotyrosine modification. The interval 184–204 is disordered; sequence SSPHGKHGNRNSNSYGIPEPA. Residue Y207 is modified to Phosphotyrosine. Residues 235 to 296 enclose the SH3 2 domain; the sequence is NGPVFAKAIQ…PFTHVKIFDP (62 aa).

It belongs to the CRK family. Interacts with INPP5D/SHIP1. Interacts with DOCK2 and EPOR. Interacts with phosphorylated CBLB and IRS4. Interacts with BCAR1/CAS and NEDD9/HEF1.

Functionally, may mediate the transduction of intracellular signals. This is Crk-like protein from Rattus norvegicus (Rat).